A 205-amino-acid polypeptide reads, in one-letter code: Small ribosomal subunit protein uS2 (205 aa).

Belongs to the universal ribosomal protein uS2 family.

In Aeropyrum pernix (strain ATCC 700893 / DSM 11879 / JCM 9820 / NBRC 100138 / K1), this protein is Small ribosomal subunit protein uS2 (rps2).